We begin with the raw amino-acid sequence, 142 residues long: Large ribosomal subunit protein uL11 (142 aa).

It belongs to the universal ribosomal protein uL11 family. In terms of assembly, part of the ribosomal stalk of the 50S ribosomal subunit. Interacts with L10 and the large rRNA to form the base of the stalk. L10 forms an elongated spine to which L12 dimers bind in a sequential fashion forming a multimeric L10(L12)X complex. In terms of processing, one or more lysine residues are methylated.

Forms part of the ribosomal stalk which helps the ribosome interact with GTP-bound translation factors. The protein is Large ribosomal subunit protein uL11 of Serratia marcescens.